The chain runs to 376 residues: Erythronate-4-phosphate dehydrogenase (376 aa).

2 residues coordinate substrate: Ser45 and Thr67. Asp147 contributes to the NAD(+) binding site. Residue Arg209 is part of the active site. Asp233 lines the NAD(+) pocket. Glu238 is a catalytic residue. His255 serves as the catalytic Proton donor. Gly258 lines the NAD(+) pocket. Position 259 (Tyr259) interacts with substrate.

The protein belongs to the D-isomer specific 2-hydroxyacid dehydrogenase family. PdxB subfamily. Homodimer.

Its subcellular location is the cytoplasm. The enzyme catalyses 4-phospho-D-erythronate + NAD(+) = (R)-3-hydroxy-2-oxo-4-phosphooxybutanoate + NADH + H(+). The protein operates within cofactor biosynthesis; pyridoxine 5'-phosphate biosynthesis; pyridoxine 5'-phosphate from D-erythrose 4-phosphate: step 2/5. Functionally, catalyzes the oxidation of erythronate-4-phosphate to 3-hydroxy-2-oxo-4-phosphonooxybutanoate. The chain is Erythronate-4-phosphate dehydrogenase from Shewanella halifaxensis (strain HAW-EB4).